The following is a 65-amino-acid chain: Small, acid-soluble spore protein C3 (65 aa).

It belongs to the alpha/beta-type SASP family.

Its function is as follows. SASP are bound to spore DNA. They are double-stranded DNA-binding proteins that cause DNA to change to an a-like conformation. They protect the DNA backbone from chemical and enzymatic cleavage and are thus involved in dormant spore's high resistance to UV light. The chain is Small, acid-soluble spore protein C3 (SASP-C3) from Priestia megaterium (Bacillus megaterium).